Here is a 169-residue protein sequence, read N- to C-terminus: uncharacterized protein (169 aa).

This is an uncharacterized protein from Buchnera aphidicola subsp. Acyrthosiphon pisum (strain APS) (Acyrthosiphon pisum symbiotic bacterium).